A 38-amino-acid polypeptide reads, in one-letter code: Alpha-conotoxin LvIC (38 aa).

Residues 1 to 21 (SNGRNAAAGDKPSYWITLAIT) constitute a propeptide that is removed on maturation. 2 disulfide bridges follow: C23–C29 and C24–C34. Residue Q35 is modified to Glutamine amide.

It belongs to the conotoxin A superfamily. In terms of processing, the two analogs ([DelQ14]LvIC and [D1G,DelQ14]LvIC) are amidated at their N-terminal Cys. As to expression, expressed by the venom gland.

It localises to the secreted. In terms of biological role, alpha-conotoxins bind to the nicotinic acetylcholine receptors (nAChR) and inhibit them. This synthetic peptide inhibits rat alpha-6/alpha-3-beta-4 nAChR (IC(50)=3.3 uM). This is Alpha-conotoxin LvIC from Conus lividus (Livid cone).